A 649-amino-acid chain; its full sequence is Acetyl-coenzyme A synthetase (649 aa).

CoA is bound by residues 190–193 (RGGR) and Thr310. ATP is bound by residues 386-388 (GEP), 410-415 (DTWWQT), Asp499, and Arg514. Position 522 (Ser522) interacts with CoA. Residue Arg525 participates in ATP binding. Mg(2+) contacts are provided by Val536, His538, and Val541. Residue Arg583 participates in CoA binding. At Lys608 the chain carries N6-acetyllysine.

Belongs to the ATP-dependent AMP-binding enzyme family. Requires Mg(2+) as cofactor. In terms of processing, acetylated. Deacetylation by the SIR2-homolog deacetylase activates the enzyme.

It catalyses the reaction acetate + ATP + CoA = acetyl-CoA + AMP + diphosphate. In terms of biological role, catalyzes the conversion of acetate into acetyl-CoA (AcCoA), an essential intermediate at the junction of anabolic and catabolic pathways. AcsA undergoes a two-step reaction. In the first half reaction, AcsA combines acetate with ATP to form acetyl-adenylate (AcAMP) intermediate. In the second half reaction, it can then transfer the acetyl group from AcAMP to the sulfhydryl group of CoA, forming the product AcCoA. The chain is Acetyl-coenzyme A synthetase from Methylorubrum extorquens (strain PA1) (Methylobacterium extorquens).